A 534-amino-acid chain; its full sequence is Inorganic phosphate transporter 1-6 (534 aa).

Over methionine 1 to alanine 29 the chain is Cytoplasmic. A helical transmembrane segment spans residues isoleucine 30 to valine 50. Residues threonine 51–serine 75 lie on the Extracellular side of the membrane. The chain crosses the membrane as a helical span at residues alanine 76 to leucine 96. Topologically, residues glycine 97–arginine 104 are cytoplasmic. Residues valine 105–glycine 125 form a helical membrane-spanning segment. Residues histidine 126–threonine 127 lie on the Extracellular side of the membrane. A helical membrane pass occupies residues proline 128–glycine 148. Residues aspartate 149–alanine 168 lie on the Cytoplasmic side of the membrane. A helical membrane pass occupies residues phenylalanine 169–isoleucine 189. Residues leucine 190 to alanine 216 are Extracellular-facing. A helical membrane pass occupies residues aspartate 217–tryptophan 237. Over arginine 238–arginine 294 the chain is Cytoplasmic. The chain crosses the membrane as a helical span at residues histidine 295 to serine 315. Over glutamine 316 to threonine 350 the chain is Extracellular. A helical transmembrane segment spans residues leucine 351–valine 371. The Cytoplasmic portion of the chain corresponds to glycine 372–lysine 375. A helical membrane pass occupies residues isoleucine 376–histidine 396. The Extracellular segment spans residues histidine 397–histidine 405. A helical membrane pass occupies residues valine 406–threonine 426. At threonine 427–glycine 445 the chain is on the cytoplasmic side. The helical transmembrane segment at isoleucine 446–alanine 466 threads the bilayer. At glutamine 467–asparagine 486 the chain is on the extracellular side. The helical transmembrane segment at serine 487 to glutamate 507 threads the bilayer. Over serine 508 to leucine 534 the chain is Cytoplasmic. A disordered region spans residues glutamate 514 to leucine 534.

The protein belongs to the major facilitator superfamily. Phosphate:H(+) symporter (TC 2.A.1.9) family. In terms of tissue distribution, highly expressed in leaves and at low levels in roots. Expressed in leaf xylem parenchyma cells.

It is found in the membrane. Functionally, high-affinity transporter for external inorganic phosphate (Pi). Probably involved in Pi uptake, translocation and internal transport throughout the plant. This is Inorganic phosphate transporter 1-6 (PHT1-6) from Oryza sativa subsp. japonica (Rice).